Reading from the N-terminus, the 154-residue chain is Ribosomal RNA large subunit methyltransferase H (154 aa).

Residues Leu-70, Gly-102, and 121 to 126 (LSRLTF) contribute to the S-adenosyl-L-methionine site.

The protein belongs to the RNA methyltransferase RlmH family. In terms of assembly, homodimer.

It localises to the cytoplasm. The enzyme catalyses pseudouridine(1915) in 23S rRNA + S-adenosyl-L-methionine = N(3)-methylpseudouridine(1915) in 23S rRNA + S-adenosyl-L-homocysteine + H(+). Specifically methylates the pseudouridine at position 1915 (m3Psi1915) in 23S rRNA. This chain is Ribosomal RNA large subunit methyltransferase H, found in Geobacter metallireducens (strain ATCC 53774 / DSM 7210 / GS-15).